A 1019-amino-acid chain; its full sequence is Vacuolar membrane protease (1019 aa).

Residues 1–69 (MFLEINFYST…DRIPTVVGFR (69 aa)) lie on the Cytoplasmic side of the membrane. A helical transmembrane segment spans residues 70–90 (VIPTTVLVLLTYLTIFTLVIV). At 91–404 (TDWLPEPPKN…AELVIFYLND (314 aa)) the chain is on the vacuolar side. A glycan (N-linked (GlcNAc...) asparagine) is linked at Asn-158. Positions 195 and 207 each coordinate Zn(2+). Glu-239 (proton acceptor) is an active-site residue. Glu-240 contributes to the Zn(2+) binding site. The N-linked (GlcNAc...) asparagine glycan is linked to Asn-256. Residues Glu-265 and His-341 each coordinate Zn(2+). The helical transmembrane segment at 405 to 425 (LLIYNVVSLVVGPISLIFFVV) threads the bilayer. Over 426–466 (CEYVLRNERARQPNGHPVSRPSVLEWLKQRSWLRALWRRSK) the chain is Cytoplasmic. A helical transmembrane segment spans residues 467–487 (FWIALVITIALQALLVWGYLA). Residues 488–497 (FNSFTVYSSP) are Vacuolar-facing. Residues 498–518 (YLVLISFFSLAYLSLVIPLTF) traverse the membrane as a helical segment. Over 519–539 (TFNQTQSPTAKYIAPEREKHT) the chain is Cytoplasmic. The chain crosses the membrane as a helical span at residues 540–560 (LLIQVYIFTWILLLFSTIAVA). Residues 561–565 (RAQVG) are Vacuolar-facing. Residues 566–586 (GLYFVTAWNTGVWIACLLAAV) traverse the membrane as a helical segment. Over 587–651 (EGMMLPVPQG…ASLRKPQEGG (65 aa)) the chain is Cytoplasmic. Residues 603–634 (HSAHHHHHHEHEEDQDADDDDREQRQPPTEAT) form a disordered region. The chain crosses the membrane as a helical span at residues 652–672 (VVGWWIVHLLLTIPAPVLLIA). Topologically, residues 673-692 (QMGSLLLDSLPQTLADGSPA) are vacuolar. A helical transmembrane segment spans residues 693 to 713 (YVVYAAASLTAVLLAVPLTPF). The Cytoplasmic portion of the chain corresponds to 714–719 (SGKLHR). The chain crosses the membrane as a helical span at residues 720–740 (GLFFLFFLSFLIVTAYLWLAF). The Vacuolar segment spans residues 741–1019 (PFSSADPLKV…LVEAWSPFSV (279 aa)). An N-linked (GlcNAc...) asparagine glycan is attached at Asn-774.

It belongs to the peptidase M28 family. The cofactor is Zn(2+).

It localises to the vacuole membrane. Its function is as follows. May be involved in vacuolar sorting and osmoregulation. This Laccaria bicolor (strain S238N-H82 / ATCC MYA-4686) (Bicoloured deceiver) protein is Vacuolar membrane protease.